The following is a 374-amino-acid chain: UPF0754 membrane protein SAS1767 (374 aa).

The next 2 helical transmembrane spans lie at 4 to 24 (LFII…TNVI) and 354 to 374 (SLGF…AIFV).

The protein belongs to the UPF0754 family.

Its subcellular location is the cell membrane. This is UPF0754 membrane protein SAS1767 from Staphylococcus aureus (strain MSSA476).